The sequence spans 305 residues: GTPase Era (305 aa).

One can recognise an Era-type G domain in the interval 9-176 (KSGFISIIGR…LDTLPKYLPE (168 aa)). The G1 stretch occupies residues 17-24 (GRPNVGKS). 17–24 (GRPNVGKS) provides a ligand contact to GTP. The G2 stretch occupies residues 43-47 (QTTRN). The G3 stretch occupies residues 64–67 (DTPG). Residues 64–68 (DTPGI) and 126–129 (NKID) contribute to the GTP site. Residues 126 to 129 (NKID) are G4. The interval 155–157 (ISA) is G5. Residues 207-286 (TREEIPHSIA…YLELWVKVQK (80 aa)) enclose the KH type-2 domain.

The protein belongs to the TRAFAC class TrmE-Era-EngA-EngB-Septin-like GTPase superfamily. Era GTPase family. In terms of assembly, monomer.

Its subcellular location is the cytoplasm. It is found in the cell membrane. Functionally, an essential GTPase that binds both GDP and GTP, with rapid nucleotide exchange. Plays a role in 16S rRNA processing and 30S ribosomal subunit biogenesis and possibly also in cell cycle regulation and energy metabolism. This chain is GTPase Era, found in Lysinibacillus sphaericus (strain C3-41).